The chain runs to 226 residues: uncharacterized protein (226 aa).

The ABC transporter domain occupies 4–226 (LQFQQVGYWY…FTVKENVAVV (223 aa)). 38 to 45 (GTSGTGKT) contributes to the ATP binding site.

The protein belongs to the ABC transporter superfamily.

This is an uncharacterized protein from Bacillus subtilis (strain 168).